The sequence spans 72 residues: Conotoxin VnMKLT2-021 (72 aa).

The first 22 residues, 1–22 (MKLTCVLIVAVLFLTACQLTTA), serve as a signal peptide directing secretion. Positions 23 to 45 (ASYARSEREHPDLGSSDQNSKLT) are excised as a propeptide. The interval 25–44 (YARSEREHPDLGSSDQNSKL) is disordered. Cystine bridges form between Cys48–Cys62, Cys55–Cys66, and Cys61–Cys71.

It belongs to the conotoxin O1 superfamily. As to expression, expressed by the venom duct.

It localises to the secreted. The sequence is that of Conotoxin VnMKLT2-021 from Conus ventricosus (Mediterranean cone).